The chain runs to 72 residues: Translation initiation factor IF-1 (72 aa).

One can recognise an S1-like domain in the interval 1–72 (MAKEDCIEMQ…SKARIIFRAR (72 aa)).

The protein belongs to the IF-1 family. Component of the 30S ribosomal translation pre-initiation complex which assembles on the 30S ribosome in the order IF-2 and IF-3, IF-1 and N-formylmethionyl-tRNA(fMet); mRNA recruitment can occur at any time during PIC assembly.

It is found in the cytoplasm. Functionally, one of the essential components for the initiation of protein synthesis. Stabilizes the binding of IF-2 and IF-3 on the 30S subunit to which N-formylmethionyl-tRNA(fMet) subsequently binds. Helps modulate mRNA selection, yielding the 30S pre-initiation complex (PIC). Upon addition of the 50S ribosomal subunit IF-1, IF-2 and IF-3 are released leaving the mature 70S translation initiation complex. In Actinobacillus pleuropneumoniae serotype 5b (strain L20), this protein is Translation initiation factor IF-1.